The chain runs to 326 residues: tRNA-modifying protein YgfZ (326 aa).

Trp-27 and Trp-189 together coordinate folate.

This sequence belongs to the tRNA-modifying YgfZ family.

It is found in the cytoplasm. Its function is as follows. Folate-binding protein involved in regulating the level of ATP-DnaA and in the modification of some tRNAs. It is probably a key factor in regulatory networks that act via tRNA modification, such as initiation of chromosomal replication. This chain is tRNA-modifying protein YgfZ, found in Shigella boydii serotype 18 (strain CDC 3083-94 / BS512).